The sequence spans 121 residues: Large ribosomal subunit protein uL14 (121 aa).

The protein belongs to the universal ribosomal protein uL14 family. Part of the 50S ribosomal subunit. Forms a cluster with proteins L3 and L19. In the 70S ribosome, L14 and L19 interact and together make contacts with the 16S rRNA in bridges B5 and B8.

In terms of biological role, binds to 23S rRNA. Forms part of two intersubunit bridges in the 70S ribosome. In Azobacteroides pseudotrichonymphae genomovar. CFP2, this protein is Large ribosomal subunit protein uL14.